Reading from the N-terminus, the 503-residue chain is Maturase K (503 aa).

Belongs to the intron maturase 2 family. MatK subfamily.

The protein resides in the plastid. Its subcellular location is the chloroplast. Its function is as follows. Usually encoded in the trnK tRNA gene intron. Probably assists in splicing its own and other chloroplast group II introns. In Lathyrus vestitus (Pacific pea), this protein is Maturase K.